We begin with the raw amino-acid sequence, 365 residues long: Synapse-associated protein 1 (365 aa).

Positions 1 to 65 (MFGGLSSWLG…QPPTEDPQFL (65 aa)) are disordered. The span at 52 to 62 (EQQQQPPTEDP) shows a compositional bias: low complexity. In terms of domain architecture, BSD spans 172 to 224 (VQFNFDFDQMYPVALVMLQEDELLSKMRFALVPKLVKEEVFWRNYFYRISLIK). The disordered stretch occupies residues 237-259 (QASGKEEKSSNRDDNLPLTEAVR). Positions 240-251 (GKEEKSSNRDDN) are enriched in basic and acidic residues. At T262 the chain carries Phosphothreonine. Phosphoserine occurs at positions 283, 298, and 327. The tract at residues 344-365 (VAESEKRDENWDKEIEKMLQES) is disordered. The segment covering 346–365 (ESEKRDENWDKEIEKMLQES) has biased composition (basic and acidic residues).

In terms of assembly, interacts (via phosphorylated form and BSD domain) with AKT1; this interaction is enhanced in a mTORC2-mediated manner in response to epidermal growth factor (EGF) stimulation and activates AKT1. Post-translationally, phosphorylated. Phosphorylation increases in a mTORC2-mediated manner in response to epidermal growth factor (EGF) stimulation. In terms of tissue distribution, expressed in the liver, kidney, skeletal muscle and in white and brown adipose tissues. Expressed in the cortex, cerebellum, thalamus, hippocampus, braistem, olfactory bulb, spinal cord and striatum of the brain. Expressed in most neuropil regions containing glutamatergic synaptic terminals. Expressed in the CA1, CA2 and CA3 perikarya of the hippocampus. Expressed in neurons and Purkinje cells (at the protein level).

The protein resides in the cytoplasm. The protein localises to the perinuclear region. It is found in the golgi apparatus. Its subcellular location is the perikaryon. It localises to the cell projection. The protein resides in the axon. The protein localises to the dendrite. It is found in the growth cone. Its subcellular location is the presynaptic cell membrane. It localises to the postsynaptic cell membrane. The protein resides in the membrane. Plays a role in adipocyte differentiation by promoting mTORC2-mediated phosphorylation of AKT1 at 'Ser-473' after growth factor stimulation. This is Synapse-associated protein 1 from Mus musculus (Mouse).